We begin with the raw amino-acid sequence, 264 residues long: Ribosomal protein L11 methyltransferase (264 aa).

S-adenosyl-L-methionine is bound by residues T116, G137, D159, and N200.

It belongs to the methyltransferase superfamily. PrmA family.

The protein resides in the cytoplasm. The enzyme catalyses L-lysyl-[protein] + 3 S-adenosyl-L-methionine = N(6),N(6),N(6)-trimethyl-L-lysyl-[protein] + 3 S-adenosyl-L-homocysteine + 3 H(+). Functionally, methylates ribosomal protein L11. This Thermotoga neapolitana protein is Ribosomal protein L11 methyltransferase.